Consider the following 738-residue polypeptide: Translation initiation factor IF-2 (738 aa).

Residues 1–10 (MNSMRISGHQ) show a composition bias toward polar residues. The tract at residues 1–150 (MNSMRISGHQ…PTTVRAPVRP (150 aa)) is disordered. The span at 22–102 (AGGGRGPGNP…GGRGPSGGRG (81 aa)) shows a compositional bias: gly residues. Basic and acidic residues predominate over residues 103–120 (GDGRRREESPTDHEDGRI). The segment covering 121 to 143 (NRSGRSTSTTTTRTSSTLARPTT) has biased composition (low complexity). The 168-residue stretch at 238-405 (PRPPVVTIMG…MILLVADLNE (168 aa)) folds into the tr-type G domain. The segment at 247-254 (GHVDHGKT) is G1. 247 to 254 (GHVDHGKT) is a GTP binding site. The tract at residues 272-276 (GITQH) is G2. The tract at residues 293–296 (DTPG) is G3. Residues 293-297 (DTPGH) and 347-350 (NKID) each bind GTP. The segment at 347 to 350 (NKID) is G4. A G5 region spans residues 383–385 (SAK).

The protein belongs to the TRAFAC class translation factor GTPase superfamily. Classic translation factor GTPase family. IF-2 subfamily.

It localises to the cytoplasm. In terms of biological role, one of the essential components for the initiation of protein synthesis. Protects formylmethionyl-tRNA from spontaneous hydrolysis and promotes its binding to the 30S ribosomal subunits. Also involved in the hydrolysis of GTP during the formation of the 70S ribosomal complex. The chain is Translation initiation factor IF-2 from Roseiflexus castenholzii (strain DSM 13941 / HLO8).